Reading from the N-terminus, the 505-residue chain is Metal transporter Nramp3.2 (505 aa).

12 helical membrane passes run 50 to 70 (LWLF…PGNL), 78 to 98 (AIAG…GLLV), 127 to 147 (MVLW…EVIG), 159 to 179 (FVPL…FLFL), 187 to 207 (LEAV…WMFA), 233 to 253 (AVGV…SALV), 280 to 300 (ALVI…KGFY), 321 to 341 (YGGG…AAGQ), 369 to 389 (ALIT…VFDT), 400 to 420 (WLNV…LCLV), 439 to 459 (AWLV…DFFF), and 466 to 486 (AFTT…IYLI).

This sequence belongs to the NRAMP (TC 2.A.55) family. As to expression, expressed in roots, stems, buds and leaves.

It is found in the vacuole membrane. It catalyses the reaction Mn(2+)(in) = Mn(2+)(out). It carries out the reaction Fe(2+)(in) = Fe(2+)(out). In terms of biological role, divalent metal transporter. Can transport manganese (Mn) and iron (Fe). Involved in the release of metals stored in the vacuole. The protein is Metal transporter Nramp3.2 of Populus trichocarpa (Western balsam poplar).